Here is a 518-residue protein sequence, read N- to C-terminus: Putative BTB/POZ domain and WD-repeat protein R731 (518 aa).

Residues 22–92 enclose the BTB domain; sequence TDCQLHLTDS…FYGFPLEEPN (71 aa). The segment at 224–246 is disordered; it reads NHEESSDDEVNDDEDTDNEDTDD. A compositionally biased stretch (acidic residues) spans 228–246; sequence SSDDEVNDDEDTDNEDTDD. WD repeat units follow at residues 391-430 and 437-475; these read NHST…SLIK and FLKF…IIQN.

Belongs to the mimivirus BTB/WD family.

The protein is Putative BTB/POZ domain and WD-repeat protein R731 of Acanthamoeba polyphaga (Amoeba).